A 66-amino-acid polypeptide reads, in one-letter code: DNA gyrase inhibitor YacG (66 aa).

Zn(2+) contacts are provided by Cys9, Cys12, Cys28, and Cys32. Positions 45 to 66 are disordered; that stretch reads HKIAGSEGSEDELYSGDLEPRH.

The protein belongs to the DNA gyrase inhibitor YacG family. As to quaternary structure, interacts with GyrB. Requires Zn(2+) as cofactor.

Functionally, inhibits all the catalytic activities of DNA gyrase by preventing its interaction with DNA. Acts by binding directly to the C-terminal domain of GyrB, which probably disrupts DNA binding by the gyrase. The chain is DNA gyrase inhibitor YacG from Pseudomonas putida (strain ATCC 700007 / DSM 6899 / JCM 31910 / BCRC 17059 / LMG 24140 / F1).